A 44-amino-acid polypeptide reads, in one-letter code: Photosystem I reaction center subunit IX (44 aa).

Residues 7 to 27 (YLSVAPVLTTLWFGSLAGLLI) form a helical membrane-spanning segment.

Belongs to the PsaJ family.

The protein resides in the plastid. Its subcellular location is the chloroplast thylakoid membrane. In terms of biological role, may help in the organization of the PsaE and PsaF subunits. The protein is Photosystem I reaction center subunit IX of Nymphaea alba (White water-lily).